We begin with the raw amino-acid sequence, 299 residues long: 4-diphosphocytidyl-2-C-methyl-D-erythritol kinase (299 aa).

Lysine 16 is a catalytic residue. 101–111 (PVAAGIGGGSA) lines the ATP pocket. Residue aspartate 143 is part of the active site.

This sequence belongs to the GHMP kinase family. IspE subfamily.

The enzyme catalyses 4-CDP-2-C-methyl-D-erythritol + ATP = 4-CDP-2-C-methyl-D-erythritol 2-phosphate + ADP + H(+). It participates in isoprenoid biosynthesis; isopentenyl diphosphate biosynthesis via DXP pathway; isopentenyl diphosphate from 1-deoxy-D-xylulose 5-phosphate: step 3/6. Catalyzes the phosphorylation of the position 2 hydroxy group of 4-diphosphocytidyl-2C-methyl-D-erythritol. The protein is 4-diphosphocytidyl-2-C-methyl-D-erythritol kinase of Rhodopseudomonas palustris (strain ATCC BAA-98 / CGA009).